A 542-amino-acid polypeptide reads, in one-letter code: Chaperonin GroEL 5 (542 aa).

Residues 30-33 (TLGP), lysine 51, 87-91 (DGTTT), glycine 415, and aspartate 496 each bind ATP.

This sequence belongs to the chaperonin (HSP60) family. As to quaternary structure, forms a cylinder of 14 subunits composed of two heptameric rings stacked back-to-back. Interacts with the co-chaperonin GroES.

It localises to the cytoplasm. The enzyme catalyses ATP + H2O + a folded polypeptide = ADP + phosphate + an unfolded polypeptide.. Functionally, together with its co-chaperonin GroES, plays an essential role in assisting protein folding. The GroEL-GroES system forms a nano-cage that allows encapsulation of the non-native substrate proteins and provides a physical environment optimized to promote and accelerate protein folding. The polypeptide is Chaperonin GroEL 5 (Rhizobium meliloti (strain 1021) (Ensifer meliloti)).